The sequence spans 331 residues: L-lactate dehydrogenase A chain (331 aa).

NAD(+) is bound by residues 29-57 and arginine 98; that span reads GMVG…MEDK. Positions 105, 137, and 168 each coordinate substrate. Residue asparagine 137 coordinates NAD(+). Histidine 192 (proton acceptor) is an active-site residue. Residue threonine 247 coordinates substrate.

The protein belongs to the LDH/MDH superfamily. LDH family. Homotetramer.

Its subcellular location is the cytoplasm. The catalysed reaction is (S)-lactate + NAD(+) = pyruvate + NADH + H(+). It participates in fermentation; pyruvate fermentation to lactate; (S)-lactate from pyruvate: step 1/1. Functionally, interconverts simultaneously and stereospecifically pyruvate and lactate with concomitant interconversion of NADH and NAD(+). In Dissostichus mawsoni (Antarctic cod), this protein is L-lactate dehydrogenase A chain (ldha).